The following is a 359-amino-acid chain: MLYHLLYPLHTTYSYFNVFRYITFRTIYAAITALIICFLLGPWLIRKLRELKMGQVIRDDGPEAHLSKQGTPTMGGVLIIFAVVVSTLLWANLTIDYVWLVLMVTLGYGLIGFADDYRKLTRQSSRGVSGKVRLACEVCIALLVSVVLYAKPGFNSTIAIPFFKTVLPDLGWGYIFLSTFIIVGAANAVNLTDGLDGLAIGPAITCFMTYLLFAYFAGNFKIASYLQIPGVAGVGELSIFCGAIVGAGIGFLWYNTYPAQVFMGDTGSLSLGGALGCLAIVTKQEILLAIVGGIFVLETFSVIFQVGWFKLSHGKRIFRMAPIHHHFELKGWAEPKVIVRFWIISILLALLAISTLKLR.

10 helical membrane-spanning segments follow: residues Thr26–Arg46, Gly75–Ile95, Tyr97–Tyr117, Leu134–Phe154, Val166–Ala186, Gly197–Ala217, Gly233–Trp253, Val261–Val281, Ile286–Val306, and Lys336–Leu356.

The protein belongs to the glycosyltransferase 4 family. MraY subfamily. Mg(2+) is required as a cofactor.

Its subcellular location is the cell inner membrane. It carries out the reaction UDP-N-acetyl-alpha-D-muramoyl-L-alanyl-gamma-D-glutamyl-meso-2,6-diaminopimeloyl-D-alanyl-D-alanine + di-trans,octa-cis-undecaprenyl phosphate = di-trans,octa-cis-undecaprenyl diphospho-N-acetyl-alpha-D-muramoyl-L-alanyl-D-glutamyl-meso-2,6-diaminopimeloyl-D-alanyl-D-alanine + UMP. The protein operates within cell wall biogenesis; peptidoglycan biosynthesis. In terms of biological role, catalyzes the initial step of the lipid cycle reactions in the biosynthesis of the cell wall peptidoglycan: transfers peptidoglycan precursor phospho-MurNAc-pentapeptide from UDP-MurNAc-pentapeptide onto the lipid carrier undecaprenyl phosphate, yielding undecaprenyl-pyrophosphoryl-MurNAc-pentapeptide, known as lipid I. The chain is Phospho-N-acetylmuramoyl-pentapeptide-transferase from Syntrophus aciditrophicus (strain SB).